We begin with the raw amino-acid sequence, 816 residues long: Microbial collagenase (816 aa).

The signal sequence occupies residues 1 to 27; that stretch reads MSHIRFFPRHRLALACMLASVSSFSFA. His-435 contributes to the Zn(2+) binding site. Residue Glu-436 is part of the active site. His-439 contributes to the Zn(2+) binding site.

This sequence belongs to the peptidase M9A family. It depends on Zn(2+) as a cofactor.

The protein resides in the secreted. It catalyses the reaction Digestion of native collagen in the triple helical region at Xaa-|-Gly bonds. With synthetic peptides, a preference is shown for Gly at P3 and P1', Pro and Ala at P2 and P2', and hydroxyproline, Ala or Arg at P3'.. In terms of biological role, possesses gelatinolytic activity. Can cause weak haemolysis on blood agar. The sequence is that of Microbial collagenase (prt) from Vibrio parahaemolyticus serotype O3:K6 (strain RIMD 2210633).